The following is a 257-amino-acid chain: Imidazole glycerol phosphate synthase subunit HisF (257 aa).

Active-site residues include Asp-12 and Asp-131.

Belongs to the HisA/HisF family. Heterodimer of HisH and HisF.

The protein localises to the cytoplasm. The catalysed reaction is 5-[(5-phospho-1-deoxy-D-ribulos-1-ylimino)methylamino]-1-(5-phospho-beta-D-ribosyl)imidazole-4-carboxamide + L-glutamine = D-erythro-1-(imidazol-4-yl)glycerol 3-phosphate + 5-amino-1-(5-phospho-beta-D-ribosyl)imidazole-4-carboxamide + L-glutamate + H(+). It functions in the pathway amino-acid biosynthesis; L-histidine biosynthesis; L-histidine from 5-phospho-alpha-D-ribose 1-diphosphate: step 5/9. Functionally, IGPS catalyzes the conversion of PRFAR and glutamine to IGP, AICAR and glutamate. The HisF subunit catalyzes the cyclization activity that produces IGP and AICAR from PRFAR using the ammonia provided by the HisH subunit. The protein is Imidazole glycerol phosphate synthase subunit HisF of Marinobacter nauticus (strain ATCC 700491 / DSM 11845 / VT8) (Marinobacter aquaeolei).